The primary structure comprises 200 residues: NADH-quinone oxidoreductase subunit C (200 aa).

This sequence belongs to the complex I 30 kDa subunit family. As to quaternary structure, NDH-1 is composed of 14 different subunits. Subunits NuoB, C, D, E, F, and G constitute the peripheral sector of the complex.

It is found in the cell inner membrane. The catalysed reaction is a quinone + NADH + 5 H(+)(in) = a quinol + NAD(+) + 4 H(+)(out). Its function is as follows. NDH-1 shuttles electrons from NADH, via FMN and iron-sulfur (Fe-S) centers, to quinones in the respiratory chain. The immediate electron acceptor for the enzyme in this species is believed to be ubiquinone. Couples the redox reaction to proton translocation (for every two electrons transferred, four hydrogen ions are translocated across the cytoplasmic membrane), and thus conserves the redox energy in a proton gradient. The protein is NADH-quinone oxidoreductase subunit C of Chelativorans sp. (strain BNC1).